Here is a 355-residue protein sequence, read N- to C-terminus: Probable nitronate monooxygenase (355 aa).

FMN is bound by residues Asn-71, Gln-175, Gly-180, Gly-218, and 237–240 (QMGT).

This sequence belongs to the nitronate monooxygenase family. NMO class I subfamily. The cofactor is FMN.

The enzyme catalyses 3 propionate 3-nitronate + 3 O2 + H2O = 3 3-oxopropanoate + 2 nitrate + nitrite + H2O2 + 3 H(+). Functionally, nitronate monooxygenase that uses molecular oxygen to catalyze the oxidative denitrification of alkyl nitronates. Acts on propionate 3-nitronate (P3N), the presumed physiological substrate. Probably functions in the detoxification of P3N, a metabolic poison produced by plants and fungi as a defense mechanism. This is Probable nitronate monooxygenase from Staphylococcus aureus (strain USA300).